The primary structure comprises 170 residues: Lipoprotein signal peptidase (170 aa).

3 consecutive transmembrane segments (helical) span residues 9-29 (FNIFVFIISLIFFDQLSKYLV), 72-92 (IFFLAMPIFILIFVFYLSLKE), and 94-114 (NCIARISLLLIFSGGVGNVID). Active-site residues include Asp124 and Asp146. Residues 143–163 (NFADSYVVIGMILFLVYDFFI) form a helical membrane-spanning segment.

It belongs to the peptidase A8 family.

Its subcellular location is the cell inner membrane. The enzyme catalyses Release of signal peptides from bacterial membrane prolipoproteins. Hydrolyzes -Xaa-Yaa-Zaa-|-(S,diacylglyceryl)Cys-, in which Xaa is hydrophobic (preferably Leu), and Yaa (Ala or Ser) and Zaa (Gly or Ala) have small, neutral side chains.. The protein operates within protein modification; lipoprotein biosynthesis (signal peptide cleavage). This protein specifically catalyzes the removal of signal peptides from prolipoproteins. In Borreliella burgdorferi (strain ATCC 35210 / DSM 4680 / CIP 102532 / B31) (Borrelia burgdorferi), this protein is Lipoprotein signal peptidase.